A 113-amino-acid polypeptide reads, in one-letter code: uncharacterized protein (113 aa).

Residues 49–91 (FFVVVGKEEYVVEGGFCTCPDFLVNLKGKSPCAHIIAVEVAKI) form an SWIM-type zinc finger.

This is an uncharacterized protein from Archaeoglobus fulgidus (strain ATCC 49558 / DSM 4304 / JCM 9628 / NBRC 100126 / VC-16).